We begin with the raw amino-acid sequence, 212 residues long: Pyrrolidone-carboxylate peptidase (212 aa).

Residues glutamate 78, cysteine 141, and histidine 165 contribute to the active site.

This sequence belongs to the peptidase C15 family. In terms of assembly, homotetramer.

It is found in the cytoplasm. The enzyme catalyses Release of an N-terminal pyroglutamyl group from a polypeptide, the second amino acid generally not being Pro.. Functionally, removes 5-oxoproline from various penultimate amino acid residues except L-proline. In Staphylococcus aureus (strain bovine RF122 / ET3-1), this protein is Pyrrolidone-carboxylate peptidase.